A 626-amino-acid chain; its full sequence is Miltiradiene synthase KSL1, chloroplastic (626 aa).

The N-terminal 51 residues, 1 to 51, are a transit peptide targeting the chloroplast; it reads MSLAFNLRVIPFSGHTIQSRRGLFPVHESPMITTKPFAAVKCSLTTSTDLM. Residues aspartate 329, aspartate 333, asparagine 473, and glutamate 481 each contribute to the Mg(2+) site. A DDXXD motif motif is present at residues 329–333; that stretch reads DDFFD.

The protein belongs to the terpene synthase family. The cofactor is Mg(2+). In terms of tissue distribution, highly expressed in roots, and, at low levels, in stems and leaves.

The protein resides in the plastid. The protein localises to the chloroplast. It carries out the reaction (+)-copalyl diphosphate = miltiradiene + diphosphate. The protein operates within secondary metabolite biosynthesis; terpenoid biosynthesis. In terms of biological role, involved in the biosynthesis of ent-kaurene diterpenoids natural products such as oridonin, miltiradiene, eriocalyxin B and nezukol, known to exhibit antitumor, anti-inflammatory and antibacterial activities. Catalyzes the conversion of (+)-copalyl diphosphate ((+)-CPP) to miltiradiene. This Isodon rubescens (Rabdosia rubescens) protein is Miltiradiene synthase KSL1, chloroplastic.